Reading from the N-terminus, the 227-residue chain is Cytochrome c oxidase subunit 2 (227 aa).

The Mitochondrial intermembrane segment spans residues 1–14; sequence MAYPVQLGFQDAAS. The chain crosses the membrane as a helical span at residues 15–45; the sequence is PIMEELLYFHDHTLMIMFLISSLVLYIISLM. The Mitochondrial matrix portion of the chain corresponds to 46 to 59; that stretch reads LTTELMHTNTMDAQ. A helical transmembrane segment spans residues 60–87; sequence EVETVWTILPAAILILIALPSLRILYMM. Residues 88–227 lie on the Mitochondrial intermembrane side of the membrane; it reads DEITTPSLTL…HFEEWLLSML (140 aa). 6 residues coordinate Cu cation: histidine 161, cysteine 196, glutamate 198, cysteine 200, histidine 204, and methionine 207. Glutamate 198 lines the Mg(2+) pocket.

It belongs to the cytochrome c oxidase subunit 2 family. Component of the cytochrome c oxidase (complex IV, CIV), a multisubunit enzyme composed of 14 subunits. The complex is composed of a catalytic core of 3 subunits MT-CO1, MT-CO2 and MT-CO3, encoded in the mitochondrial DNA, and 11 supernumerary subunits COX4I, COX5A, COX5B, COX6A, COX6B, COX6C, COX7A, COX7B, COX7C, COX8 and NDUFA4, which are encoded in the nuclear genome. The complex exists as a monomer or a dimer and forms supercomplexes (SCs) in the inner mitochondrial membrane with NADH-ubiquinone oxidoreductase (complex I, CI) and ubiquinol-cytochrome c oxidoreductase (cytochrome b-c1 complex, complex III, CIII), resulting in different assemblies (supercomplex SCI(1)III(2)IV(1) and megacomplex MCI(2)III(2)IV(2)). Found in a complex with TMEM177, COA6, COX18, COX20, SCO1 and SCO2. Interacts with TMEM177 in a COX20-dependent manner. Interacts with COX20. Interacts with COX16. Requires Cu cation as cofactor.

The protein localises to the mitochondrion inner membrane. The catalysed reaction is 4 Fe(II)-[cytochrome c] + O2 + 8 H(+)(in) = 4 Fe(III)-[cytochrome c] + 2 H2O + 4 H(+)(out). In terms of biological role, component of the cytochrome c oxidase, the last enzyme in the mitochondrial electron transport chain which drives oxidative phosphorylation. The respiratory chain contains 3 multisubunit complexes succinate dehydrogenase (complex II, CII), ubiquinol-cytochrome c oxidoreductase (cytochrome b-c1 complex, complex III, CIII) and cytochrome c oxidase (complex IV, CIV), that cooperate to transfer electrons derived from NADH and succinate to molecular oxygen, creating an electrochemical gradient over the inner membrane that drives transmembrane transport and the ATP synthase. Cytochrome c oxidase is the component of the respiratory chain that catalyzes the reduction of oxygen to water. Electrons originating from reduced cytochrome c in the intermembrane space (IMS) are transferred via the dinuclear copper A center (CU(A)) of subunit 2 and heme A of subunit 1 to the active site in subunit 1, a binuclear center (BNC) formed by heme A3 and copper B (CU(B)). The BNC reduces molecular oxygen to 2 water molecules using 4 electrons from cytochrome c in the IMS and 4 protons from the mitochondrial matrix. This chain is Cytochrome c oxidase subunit 2 (MT-CO2), found in Lemur catta (Ring-tailed lemur).